We begin with the raw amino-acid sequence, 255 residues long: Hemin import ATP-binding protein HmuV (255 aa).

The region spanning 2–238 (LQVEGLYLCR…AALKAVYGID (237 aa)) is the ABC transporter domain. Residue 34–41 (GPNGAGKS) coordinates ATP.

It belongs to the ABC transporter superfamily. Heme (hemin) importer (TC 3.A.1.14.5) family. In terms of assembly, the complex is composed of two ATP-binding proteins (HmuV), two transmembrane proteins (HmuU) and a solute-binding protein (HmuT).

The protein resides in the cell inner membrane. Part of the ABC transporter complex HmuTUV involved in hemin import. Responsible for energy coupling to the transport system. The protein is Hemin import ATP-binding protein HmuV of Pseudomonas putida (strain ATCC 47054 / DSM 6125 / CFBP 8728 / NCIMB 11950 / KT2440).